Reading from the N-terminus, the 94-residue chain is Large ribosomal subunit protein uL23c (94 aa).

It belongs to the universal ribosomal protein uL23 family. Part of the 50S ribosomal subunit.

It is found in the plastid. The protein localises to the chloroplast. In terms of biological role, binds to 23S rRNA. This is Large ribosomal subunit protein uL23c (rpl23) from Tupiella akineta (Green alga).